We begin with the raw amino-acid sequence, 84 residues long: Anaphase-promoting complex subunit 11 (84 aa).

The Zn(2+) site is built by Cys-23, Cys-26, Cys-34, Cys-37, Cys-44, Cys-51, His-53, His-56, His-58, Cys-59, Cys-73, and Cys-76. The RING-type zinc finger occupies 34 to 77 (CPDCKVPGDDCPLVWGQCSHCFHMHCILKWLNAQQVQQHCPMCR).

It belongs to the RING-box family. The mammalian APC/C is composed at least of 14 distinct subunits ANAPC1, ANAPC2, CDC27/APC3, ANAPC4, ANAPC5, CDC16/APC6, ANAPC7, CDC23/APC8, ANAPC10, ANAPC11, CDC26/APC12, ANAPC13, ANAPC15 and ANAPC16 that assemble into a complex of at least 19 chains with a combined molecular mass of around 1.2 MDa; APC/C interacts with FZR1 and FBXO5. Interacts with the cullin domain of ANAPC2. Interacts with UBE2D2. Post-translationally, auto-ubiquitinated.

It is found in the cytoplasm. The protein localises to the nucleus. Its pathway is protein modification; protein ubiquitination. Functionally, together with the cullin protein ANAPC2, constitutes the catalytic component of the anaphase promoting complex/cyclosome (APC/C), a cell cycle-regulated E3 ubiquitin ligase that controls progression through mitosis and the G1 phase of the cell cycle. The APC/C complex acts by mediating ubiquitination and subsequent degradation of target proteins: it mainly mediates the formation of 'Lys-11'-linked polyubiquitin chains and, to a lower extent, the formation of 'Lys-48'- and 'Lys-63'-linked polyubiquitin chains. The APC/C complex catalyzes assembly of branched 'Lys-11'-/'Lys-48'-linked branched ubiquitin chains on target proteins. May recruit the E2 ubiquitin-conjugating enzymes to the complex. The protein is Anaphase-promoting complex subunit 11 (Anapc11) of Mus musculus (Mouse).